A 194-amino-acid polypeptide reads, in one-letter code: MMINTQEDKLVSAHDAEEFHRFFVGHDSDLQQEVTTLLTREADLLDIQAYKAWLEHCVAPEIKYQVISRELRSTSERRYQLNDAVNIYNENYQQLKVRVEHQMDPQNWYNSPKIRFTRFVTNVTAAKDKSAPEMLHVRSNLILHRARRGNQVDVFYATREDKWKRIEGGGIKLVERFVDYPERSPQTHNLMIFL.

It belongs to the bacterial ring-hydroxylating dioxygenase beta subunit family. In terms of assembly, the 2,4-dinitrotoluene dioxygenase (DNTDO) multicomponent enzyme system is composed of an electron transfer component and a dioxygenase component (iron sulfur protein (ISP)). The electron transfer component is composed of a ferredoxin reductase (DntAa) and a ferredoxin (DntAb), and the dioxygenase component is formed of a large alpha subunit (DntAc) and a small beta subunit (DntAd).

Functionally, component of the 2,4-dinitrotoluene dioxygenase (DNTDO) multicomponent enzyme system which catalyzes the incorporation of both atoms of molecular oxygen into 2,4-dinitrotoluene (DNT) to form 4-methyl-5-nitrocatechol (MNC) and nitrite. The beta subunit seems to have a structural role in the holoenzyme. Also able to convert naphthalene to cis-(1R,2S)-dihydroxy-1,2-dihydronaphthalene. The chain is 2,4-dinitrotoluene dioxygenase system, small oxygenase component from Burkholderia sp. (strain RASC).